Consider the following 178-residue polypeptide: Interleukin-10 (178 aa).

A signal peptide spans 1 to 18 (MHSSALLCCLVFLTGVRA). Cystine bridges form between Cys-30–Cys-126 and Cys-80–Cys-132. N-linked (GlcNAc...) asparagine glycosylation occurs at Asn-134.

Belongs to the IL-10 family. In terms of assembly, homodimer. Interacts with IL10RA and IL10RB.

The protein resides in the secreted. Its function is as follows. Major immune regulatory cytokine that acts on many cells of the immune system where it has profound anti-inflammatory functions, limiting excessive tissue disruption caused by inflammation. Mechanistically, IL10 binds to its heterotetrameric receptor comprising IL10RA and IL10RB leading to JAK1 and STAT2-mediated phosphorylation of STAT3. In turn, STAT3 translocates to the nucleus where it drives expression of anti-inflammatory mediators. Targets antigen-presenting cells (APCs) such as macrophages and monocytes and inhibits their release of pro-inflammatory cytokines including granulocyte-macrophage colony-stimulating factor /GM-CSF, granulocyte colony-stimulating factor/G-CSF, IL-1 alpha, IL-1 beta, IL-6, IL-8 and TNF-alpha. Also interferes with antigen presentation by reducing the expression of MHC-class II and co-stimulatory molecules, thereby inhibiting their ability to induce T cell activation. In addition, controls the inflammatory response of macrophages by reprogramming essential metabolic pathways including mTOR signaling. In Saimiri sciureus (Common squirrel monkey), this protein is Interleukin-10 (IL10).